The sequence spans 286 residues: uncharacterized protein (286 aa).

Positions 152 to 182 (YPSTTTSVTPGKKGEKTTKVDGFSSPLNQDT) are disordered. A helical transmembrane segment spans residues 198-218 (VLIAVTLFVSGIAITVFVIFE). The disordered stretch occupies residues 239–278 (RRPRKEDQQPGTAESQSDTQPKKVGQEAPNSSSPKKAVEI). Residues 247 to 257 (QPGTAESQSDT) show a composition bias toward polar residues.

The protein resides in the membrane. This is an uncharacterized protein from Bos taurus (Bovine).